Reading from the N-terminus, the 173-residue chain is MLRHLLRHENNKVFVLILLYCVLVSILKLCTAQPDSSVAATDNDITHLGDDCQVTPVIHVLQYPGCVPKPIPSFACVGRCASYIQVSGSKIWQMERSCMCCQESGEREAAVSLFCPKVKPGERKFKKVLTKAPLECMCRPCTSIEESGIIPQEIAGYSDEGPLNNHFRRIALQ.

An N-terminal signal peptide occupies residues 1–32 (MLRHLLRHENNKVFVLILLYCVLVSILKLCTA). 5 cysteine pairs are disulfide-bonded: cysteine 52/cysteine 101, cysteine 66/cysteine 115, cysteine 76/cysteine 136, cysteine 80/cysteine 138, and cysteine 98/cysteine 141. The CTCK domain maps to 52–142 (CQVTPVIHVL…PLECMCRPCT (91 aa)).

In terms of assembly, heterodimer of Burs and Pburs. In terms of tissue distribution, expressed in one to two pairs of neurons in each of the thoracic and abdominal neuromeres of the larval CNS. Coexpressed with CCAP in most CCAP-specific neurons. Coexpressed with Pburs in four bilateral neurons in thoracic and abdominal neuromeres of the ventral nervous system.

The protein localises to the secreted. Final heterodimeric neurohormone released at the end of the molting cycle, involved in the sclerotization (tanning) of the insect cuticle, melanization and wing spreading. Heterodimer specifically activates the G protein-coupled receptor rk. The chain is Bursicon from Drosophila melanogaster (Fruit fly).